Reading from the N-terminus, the 663-residue chain is Bicarbonate transport ATP-binding protein CmpC (663 aa).

The region spanning 5–239 is the ABC transporter domain; it reads VAVENIEKSF…RPRKRMDVVH (235 aa). 42-49 provides a ligand contact to ATP; the sequence is GHSGCGKS. Positions 281-663 are cmpA-like; that stretch reads LEIGYVPLMA…LDQPRPIAAA (383 aa).

This sequence belongs to the ABC transporter superfamily. Nitrate/nitrite/cyanate uptake transporter (NitT) (TC 3.A.1.16) family. The complex is composed of two ATP-binding proteins (CmpC and CmpD), a transmembrane protein (CmpB) and a solute-binding protein (CmpA).

The protein localises to the cell inner membrane. Functionally, part of the ABC transporter complex CmpABCD involved in bicarbonate transport. Responsible for energy coupling to the transport system. The sequence is that of Bicarbonate transport ATP-binding protein CmpC (cmpC) from Synechococcus elongatus (strain ATCC 33912 / PCC 7942 / FACHB-805) (Anacystis nidulans R2).